The following is a 144-amino-acid chain: Maximins 5/H4 type 3 (144 aa).

Residues 1–18 form the signal peptide; that stretch reads MNFKYIVAVSFLIASAYA. Propeptides lie at residues 19–43 and 74–123; these read RSVQ…REIR and TAED…KEKR. Leu-143 is subject to Leucine amide.

The protein belongs to the bombinin family. As to expression, expressed by the skin glands.

It localises to the secreted. Its function is as follows. Maximin-5 shows antibacterial activity against both Gram-positive and Gram-negative bacteria. The only exception is the resistance of E.coli. Also shows antimicrobial activity against fungi C.albicans, A.flavus and P.uticale. It has little hemolytic activity. It does not possess a significant cytotoxicity against tumor cell lines. It does not possess a significant anti-HIV activity. Maximin-H4 shows antibacterial activity against both Gram-positive and Gram-negative bacteria. It also shows antimicrobial activity against the fungus C.albicans. Shows strong hemolytic activity. The chain is Maximins 5/H4 type 3 from Bombina maxima (Giant fire-bellied toad).